A 337-amino-acid chain; its full sequence is NADH-quinone oxidoreductase subunit H (337 aa).

8 helical membrane passes run 9–29, 77–97, 110–130, 154–174, 181–201, 229–249, 274–294, and 313–333; these read FAKIWAVLIPLFLAVAYFTYV, FLIAPAMAIMPALAAWAVIPF, LLYILAMTSLGVYGLIIAGWA, MGFALVGVLIAAGTMNLSGIV, FWEWFWLPLLPLFLIYWISGV, MAFAVFFLAEYANMLLISFLA, VPGIVWLFAKAAFFAFCYLWF, and VLIPGTVVWLVVLTGLVYGGV.

The protein belongs to the complex I subunit 1 family. As to quaternary structure, NDH-1 is composed of 14 different subunits. Subunits NuoA, H, J, K, L, M, N constitute the membrane sector of the complex.

Its subcellular location is the cell inner membrane. It carries out the reaction a quinone + NADH + 5 H(+)(in) = a quinol + NAD(+) + 4 H(+)(out). NDH-1 shuttles electrons from NADH, via FMN and iron-sulfur (Fe-S) centers, to quinones in the respiratory chain. The immediate electron acceptor for the enzyme in this species is believed to be ubiquinone. Couples the redox reaction to proton translocation (for every two electrons transferred, four hydrogen ions are translocated across the cytoplasmic membrane), and thus conserves the redox energy in a proton gradient. This subunit may bind ubiquinone. In Halorhodospira halophila (strain DSM 244 / SL1) (Ectothiorhodospira halophila (strain DSM 244 / SL1)), this protein is NADH-quinone oxidoreductase subunit H.